The chain runs to 383 residues: TnpB-like protein ORF383B (383 aa).

Positions 328, 331, 345, and 348 each coordinate Zn(2+).

This sequence in the N-terminal section; belongs to the transposase 2 family. The protein in the C-terminal section; belongs to the transposase 35 family.

The protein is TnpB-like protein ORF383B of Acidianus convivator (ATV).